A 377-amino-acid polypeptide reads, in one-letter code: Queuine tRNA-ribosyltransferase (377 aa).

The active-site Proton acceptor is D93. Residues D93–F97, D147, Q190, and G216 contribute to the substrate site. Residues G247–D253 are RNA binding. D266 functions as the Nucleophile in the catalytic mechanism. The tract at residues T271–R275 is RNA binding; important for wobble base 34 recognition. Zn(2+) is bound by residues C304, C306, C309, and H335.

The protein belongs to the queuine tRNA-ribosyltransferase family. Homodimer. Within each dimer, one monomer is responsible for RNA recognition and catalysis, while the other monomer binds to the replacement base PreQ1. Zn(2+) is required as a cofactor.

It catalyses the reaction 7-aminomethyl-7-carbaguanine + guanosine(34) in tRNA = 7-aminomethyl-7-carbaguanosine(34) in tRNA + guanine. Its pathway is tRNA modification; tRNA-queuosine biosynthesis. Functionally, catalyzes the base-exchange of a guanine (G) residue with the queuine precursor 7-aminomethyl-7-deazaguanine (PreQ1) at position 34 (anticodon wobble position) in tRNAs with GU(N) anticodons (tRNA-Asp, -Asn, -His and -Tyr). Catalysis occurs through a double-displacement mechanism. The nucleophile active site attacks the C1' of nucleotide 34 to detach the guanine base from the RNA, forming a covalent enzyme-RNA intermediate. The proton acceptor active site deprotonates the incoming PreQ1, allowing a nucleophilic attack on the C1' of the ribose to form the product. After dissociation, two additional enzymatic reactions on the tRNA convert PreQ1 to queuine (Q), resulting in the hypermodified nucleoside queuosine (7-(((4,5-cis-dihydroxy-2-cyclopenten-1-yl)amino)methyl)-7-deazaguanosine). This Granulibacter bethesdensis (strain ATCC BAA-1260 / CGDNIH1) protein is Queuine tRNA-ribosyltransferase.